A 180-amino-acid chain; its full sequence is MKEKIPFYNEKEFHYMMKKTKKGTFSGWYIINPENNSVEFSGSFNRQFKLNKPVIPVNTEYVTRKEFNEYKDSNDQRLTKIENKVDKLEIKVDKLEKKVDKLEVKVDKLVETVNAQGEDLNNFKVEVRGTLQSQGETLQLILQTLQGMSKRLDSVEGRLDSMDGRLDSMETRLDKIDPLK.

It belongs to the UPF0134 family.

In Mycoplasma pneumoniae (strain ATCC 29342 / M129 / Subtype 1) (Mycoplasmoides pneumoniae), this protein is UPF0134 protein MPN_368.